The primary structure comprises 344 residues: Putative replication factor C small subunit L499 (344 aa).

57–64 (GPSGSGKT) is an ATP binding site.

It belongs to the activator 1 small subunits family. RfcS subfamily.

Its function is as follows. Part of the RFC clamp loader complex which loads the PCNA sliding clamp onto DNA. This is Putative replication factor C small subunit L499 from Acanthamoeba polyphaga mimivirus (APMV).